A 281-amino-acid polypeptide reads, in one-letter code: MGAIMLDGKATRDEIFGDLKPRVAALDAAGRTPGLGTILVGDDPGSQAYVRGKHADCAKVGITSIRRDLPADISTATLNETIDELNANPDCTGYIVQLPLPKHLDENAALERVDPAKDADGLHPTNLGRLVLGTPAPLPCTPRGIVHLLRRYDISIAGAHVVVIGRGVTVGRPLGLLLTRRSENATVTLCHTGTRDLPALTRQADIVVAAVGVAHLLTADMVRPGAAVIDVGVSRTDDGLVGDVHPDVWELAGHVSPNPGGVGPLTRAFLLTNVVELAERR.

Residues 165 to 167 (GRG), Thr192, and Val233 each bind NADP(+).

The protein belongs to the tetrahydrofolate dehydrogenase/cyclohydrolase family. As to quaternary structure, homodimer.

It carries out the reaction (6R)-5,10-methylene-5,6,7,8-tetrahydrofolate + NADP(+) = (6R)-5,10-methenyltetrahydrofolate + NADPH. The catalysed reaction is (6R)-5,10-methenyltetrahydrofolate + H2O = (6R)-10-formyltetrahydrofolate + H(+). It participates in one-carbon metabolism; tetrahydrofolate interconversion. In terms of biological role, catalyzes the oxidation of 5,10-methylenetetrahydrofolate to 5,10-methenyltetrahydrofolate and then the hydrolysis of 5,10-methenyltetrahydrofolate to 10-formyltetrahydrofolate. In Mycobacterium bovis (strain BCG / Tokyo 172 / ATCC 35737 / TMC 1019), this protein is Bifunctional protein FolD.